Reading from the N-terminus, the 423-residue chain is Imidazolonepropionase (423 aa).

His-78 and His-80 together coordinate Fe(3+). Zn(2+) is bound by residues His-78 and His-80. 4-imidazolone-5-propanoate is bound by residues Arg-87, Tyr-150, and His-183. Residue Tyr-150 participates in N-formimidoyl-L-glutamate binding. His-247 provides a ligand contact to Fe(3+). Residue His-247 coordinates Zn(2+). Glu-250 contacts 4-imidazolone-5-propanoate. Position 322 (Asp-322) interacts with Fe(3+). Asp-322 is a binding site for Zn(2+). Positions 324 and 326 each coordinate N-formimidoyl-L-glutamate. Ser-327 serves as a coordination point for 4-imidazolone-5-propanoate.

This sequence belongs to the metallo-dependent hydrolases superfamily. HutI family. Zn(2+) serves as cofactor. The cofactor is Fe(3+).

Its subcellular location is the cytoplasm. The catalysed reaction is 4-imidazolone-5-propanoate + H2O = N-formimidoyl-L-glutamate. It functions in the pathway amino-acid degradation; L-histidine degradation into L-glutamate; N-formimidoyl-L-glutamate from L-histidine: step 3/3. Catalyzes the hydrolytic cleavage of the carbon-nitrogen bond in imidazolone-5-propanoate to yield N-formimidoyl-L-glutamate. It is the third step in the universal histidine degradation pathway. The protein is Imidazolonepropionase of Bacillus cereus (strain B4264).